A 314-amino-acid polypeptide reads, in one-letter code: Secreted frizzled-related protein 1 (314 aa).

A signal peptide spans 1–31 (MGVGRSEGGRRGAALGVLLALGVALLAVGSA). The FZ domain maps to 53 to 169 (TKPHQCVAIP…FPQDYVCIAM (117 aa)). Disulfide bonds link cysteine 58–cysteine 121, cysteine 68–cysteine 114, cysteine 105–cysteine 140, cysteine 129–cysteine 166, and cysteine 133–cysteine 157. Asparagine 173 carries an N-linked (GlcNAc...) asparagine glycan. 3 disulfide bridges follow: cysteine 186–cysteine 256, cysteine 189–cysteine 258, and cysteine 203–cysteine 306. The region spanning 186–306 (CPPCDNEMKS…FMKKVKAPDC (121 aa)) is the NTR domain.

This sequence belongs to the secreted frizzled-related protein (sFRP) family.

The protein resides in the secreted. Its function is as follows. Soluble frizzled-related proteins (sFRPS) function as modulators of Wnt signaling through direct interaction with Wnts. They have a role in regulating cell growth and differentiation in specific cell types. This chain is Secreted frizzled-related protein 1 (SFRP1), found in Gallus gallus (Chicken).